Reading from the N-terminus, the 178-residue chain is ATP synthase subunit delta (178 aa).

Belongs to the ATPase delta chain family. In terms of assembly, F-type ATPases have 2 components, F(1) - the catalytic core - and F(0) - the membrane proton channel. F(1) has five subunits: alpha(3), beta(3), gamma(1), delta(1), epsilon(1). F(0) has three main subunits: a(1), b(2) and c(10-14). The alpha and beta chains form an alternating ring which encloses part of the gamma chain. F(1) is attached to F(0) by a central stalk formed by the gamma and epsilon chains, while a peripheral stalk is formed by the delta and b chains.

It localises to the cell membrane. Functionally, f(1)F(0) ATP synthase produces ATP from ADP in the presence of a proton or sodium gradient. F-type ATPases consist of two structural domains, F(1) containing the extramembraneous catalytic core and F(0) containing the membrane proton channel, linked together by a central stalk and a peripheral stalk. During catalysis, ATP synthesis in the catalytic domain of F(1) is coupled via a rotary mechanism of the central stalk subunits to proton translocation. This protein is part of the stalk that links CF(0) to CF(1). It either transmits conformational changes from CF(0) to CF(1) or is implicated in proton conduction. The protein is ATP synthase subunit delta of Anoxybacillus flavithermus (strain DSM 21510 / WK1).